Here is a 931-residue protein sequence, read N- to C-terminus: Dipeptidyl aminopeptidase A (931 aa).

Residues 1 to 13 show a composition bias toward basic residues; it reads MSASTHSHKRKNS. The tract at residues 1 to 58 is disordered; sequence MSASTHSHKRKNSHLFPQRKSSNSSMDKPFFPNNDSVANTDPQSNENGHTINEIRPTE. The Cytoplasmic segment spans residues 1-119; sequence MSASTHSHKR…GEWSLPEKRS (119 aa). Over residues 33-50 the composition is skewed to polar residues; that stretch reads NNDSVANTDPQSNENGHT. A helical; Signal-anchor for type II membrane protein membrane pass occupies residues 120-140; sequence YVLVFTLIALSVLVLLVILIP. Topologically, residues 141–931 are lumenal; sequence SKLLPTKITR…RFDNTEVLHL (791 aa). Asn-377 carries an N-linked (GlcNAc...) asparagine glycan. Ser-785 (charge relay system) is an active-site residue. Residue Asn-814 is glycosylated (N-linked (GlcNAc...) asparagine). Residues Asp-863 and His-896 each act as charge relay system in the active site.

This sequence belongs to the peptidase S9B family.

The protein resides in the vacuole membrane. In terms of biological role, responsible for the proteolytic maturation of the alpha-factor precursor. The protein is Dipeptidyl aminopeptidase A (STE13) of Saccharomyces cerevisiae (strain ATCC 204508 / S288c) (Baker's yeast).